The following is a 451-amino-acid chain: MINNINRIKKTYNTFLNVNKLRYSTSIISSNILENDNNNIDDFEQVLKSTKVRMPTSALLLPKKPKVCIGMSGGVDSTITAKLLKLQGFDVTGVFIKSWDEVEDTGRCQGERDWKDALEASNFLDIPMYKADFVKDYWNRVFVDFLKDYKNGLTPNPDVWCNREIKFDLFFDFAKENFGVDYIATGHYSNLYYGEENVGDNNNNNLQLHRAIDKNKDQTFFLCMTKGERLKQAIFPIGGFTKENIVSFAKTIPNFSKITSKKSSRGICFIGKRPLPDFLSQYMTLKPGDFFDISTNSFIKGKKHKGSVCYTMGQKANIDSLSERYFIVRSDIERNIVYVCPESQFDQFSLYYEFNTHSFNWINEIPTEVKSEQGFKGRGICRHRGDVVNLTIKDTGKTSPIDGSVIYSVNLDQPLRSVASGQILCLFDRNTDRCFGGGVINSSPLYNPTQF.

70–77 (GMSGGVDS) contacts ATP. Positions 156 to 158 (NPD) are interaction with target base in tRNA. Residue cysteine 161 is the Nucleophile of the active site. Cysteine 161 and cysteine 268 are disulfide-bonded. Glycine 186 is a binding site for ATP. The tract at residues 216 to 218 (KDQ) is interaction with tRNA. The Cysteine persulfide intermediate role is filled by cysteine 268. The interaction with tRNA stretch occupies residues 386-387 (DV).

The protein belongs to the MnmA/TRMU family.

It localises to the mitochondrion. It carries out the reaction 5-taurinomethyluridine(34) in tRNA + S-sulfanyl-L-cysteinyl-[protein] + AH2 + ATP = 5-taurinomethyl-2-thiouridine(34) in tRNA + L-cysteinyl-[protein] + A + AMP + diphosphate + H(+). Its function is as follows. Catalyzes the 2-thiolation of uridine at the wobble position (U34) of mitochondrial tRNA(Lys), tRNA(Glu) and tRNA(Gln). Required for the formation of 5-taurinomethyl-2-thiouridine (tm5s2U) of mitochondrial tRNA(Lys), tRNA(Glu), and tRNA(Gln) at the wobble position. ATP is required to activate the C2 atom of the wobble base. The polypeptide is Mitochondrial tRNA-specific 2-thiouridylase 1 (trmu) (Dictyostelium discoideum (Social amoeba)).